A 221-amino-acid chain; its full sequence is Stromal cell-derived factor 2-like protein 1 (221 aa).

The N-terminal stretch at 1–28 is a signal peptide; that stretch reads MWSAGRGGAAWPVLLGLLLALLVPGGGA. 3 consecutive MIR domains span residues 33–87, 95–150, and 151–205; these read AELV…IRGG, GSPV…VRCS, and GQHW…AMEG. Position 215 is a phosphoserine (S215). Residues 218-221 carry the Prevents secretion from ER motif; sequence HDEL.

In terms of assembly, part of a large chaperone multiprotein complex comprising CABP1, DNAJB11, HSP90B1, HSPA5, HYOU, PDIA2, PDIA4, PPIB, SDF2L1, UGGT1 and very small amounts of ERP29, but not, or at very low levels, CALR nor CANX. As to expression, ubiquitously expressed with high expression in testis, moderate expression in the pancreas, spleen, prostate, small intestine and colon. Very low expression is seen in brain and skeletal muscle.

The protein resides in the endoplasmic reticulum lumen. This Homo sapiens (Human) protein is Stromal cell-derived factor 2-like protein 1 (SDF2L1).